Here is a 569-residue protein sequence, read N- to C-terminus: Protein misato homolog 1 (569 aa).

A phosphoserine mark is found at serine 41 and serine 495.

The protein belongs to the misato family.

It localises to the mitochondrion outer membrane. Its subcellular location is the cytoplasm. Functionally, involved in the regulation of mitochondrial distribution and morphology. Required for mitochondrial fusion and mitochondrial network formation. This is Protein misato homolog 1 (MSTO1) from Macaca fascicularis (Crab-eating macaque).